A 121-amino-acid polypeptide reads, in one-letter code: uncharacterized protein (121 aa).

Residues 11–31 (IFQFFVFPFYYFLLIITEIGF) form a helical membrane-spanning segment.

It is found in the membrane. This is an uncharacterized protein from Schizosaccharomyces pombe (strain 972 / ATCC 24843) (Fission yeast).